Reading from the N-terminus, the 122-residue chain is Large ribosomal subunit protein bL12 (122 aa).

It belongs to the bacterial ribosomal protein bL12 family. Homodimer. Part of the ribosomal stalk of the 50S ribosomal subunit. Forms a multimeric L10(L12)X complex, where L10 forms an elongated spine to which 2 to 4 L12 dimers bind in a sequential fashion. Binds GTP-bound translation factors.

In terms of biological role, forms part of the ribosomal stalk which helps the ribosome interact with GTP-bound translation factors. Is thus essential for accurate translation. The chain is Large ribosomal subunit protein bL12 from Streptococcus mutans serotype c (strain ATCC 700610 / UA159).